Reading from the N-terminus, the 307-residue chain is Myeloid-associated differentiation marker-like protein 2 (307 aa).

MARVEL domains are found at residues 17–154 and 159–303; these read AVTS…ARPG and YMAT…RIRF. A run of 7 helical transmembrane segments spans residues 53-73, 90-110, 129-149, 163-183, 198-218, 232-252, and 278-298; these read FCMAAWGFCFAFSVLVVACEF, AFAMLATLLCATAAVIYPLYF, LAASVFAGLLFLAYAAEVALT, VSGLLKIVQAFVACIIFGALV, VAVYSLCFMATVAVVVLSVMG, VVYTFLAVLLYLSAAVIWPVF, and LVVAIFTYVNLLLYIVDLAYS.

It belongs to the MAL family.

Its subcellular location is the membrane. The polypeptide is Myeloid-associated differentiation marker-like protein 2 (Myadml2) (Rattus norvegicus (Rat)).